A 148-amino-acid chain; its full sequence is Snaclec 6 (148 aa).

A signal peptide spans 1–23; sequence MGRFIFVSFGLLVMFLSLSGTEA. Intrachain disulfides connect C27/C38, C55/C144, and C121/C136. The 112-residue stretch at 34 to 145 folds into the C-type lectin domain; sequence YDQNCYKAFE…CSGTHNFVCK (112 aa). N-linked (GlcNAc...) asparagine glycosylation occurs at N130.

This sequence belongs to the snaclec family. Heterodimer; disulfide-linked. As to expression, expressed by the venom gland.

The protein localises to the secreted. In terms of biological role, interferes with one step of hemostasis (modulation of platelet aggregation, or coagulation cascade, for example). The protein is Snaclec 6 of Bitis arietans (African puff adder).